The chain runs to 194 residues: A-type ATP synthase subunit E (194 aa).

The protein belongs to the V-ATPase E subunit family. In terms of assembly, has multiple subunits with at least A(3), B(3), C, D, E, F, H, I and proteolipid K(x).

The protein resides in the cell membrane. In terms of biological role, component of the A-type ATP synthase that produces ATP from ADP in the presence of a proton gradient across the membrane. The chain is A-type ATP synthase subunit E from Saccharolobus islandicus (strain Y.N.15.51 / Yellowstone #2) (Sulfolobus islandicus).